Consider the following 75-residue polypeptide: MKLCLTFLLVLMILASVTGEKLSEQTLRRAARKNKGPRCWVGRVHCTYHKDCCPSVCCFKGRCKPQSWGCWSGPT.

The N-terminal stretch at 1–19 is a signal peptide; it reads MKLCLTFLLVLMILASVTG. A propeptide spanning residues 20-34 is cleaved from the precursor; the sequence is EKLSEQTLRRAARKN. Intrachain disulfides connect Cys-39/Cys-53, Cys-46/Cys-58, Cys-52/Cys-63, and Cys-57/Cys-70.

It belongs to the conotoxin I1 superfamily. As to expression, expressed by the venom duct.

Its subcellular location is the secreted. Functionally, iota-conotoxins bind to voltage-gated sodium channels (Nav) and act as agonists by shifting the voltage-dependence of activation to more hyperpolarized levels. Produces general excitatory symptoms. The sequence is that of Iota-conotoxin-like R11.3 from Conus radiatus (Rayed cone).